The primary structure comprises 232 residues: Peptide deformylase (232 aa).

Cys135 and His178 together coordinate Fe cation. Glu179 is a catalytic residue. His182 contributes to the Fe cation binding site.

This sequence belongs to the polypeptide deformylase family. Fe(2+) is required as a cofactor.

It carries out the reaction N-terminal N-formyl-L-methionyl-[peptide] + H2O = N-terminal L-methionyl-[peptide] + formate. In terms of biological role, removes the formyl group from the N-terminal Met of newly synthesized proteins. Requires at least a dipeptide for an efficient rate of reaction. N-terminal L-methionine is a prerequisite for activity but the enzyme has broad specificity at other positions. The chain is Peptide deformylase from Deinococcus radiodurans (strain ATCC 13939 / DSM 20539 / JCM 16871 / CCUG 27074 / LMG 4051 / NBRC 15346 / NCIMB 9279 / VKM B-1422 / R1).